Reading from the N-terminus, the 309-residue chain is tRNA pseudouridine synthase B (309 aa).

The active-site Nucleophile is the Asp-51.

The protein belongs to the pseudouridine synthase TruB family. Type 1 subfamily.

It carries out the reaction uridine(55) in tRNA = pseudouridine(55) in tRNA. In terms of biological role, responsible for synthesis of pseudouridine from uracil-55 in the psi GC loop of transfer RNAs. In Coxiella burnetii (strain Dugway 5J108-111), this protein is tRNA pseudouridine synthase B.